A 529-amino-acid chain; its full sequence is UDP-glucuronosyltransferase 2B33 (529 aa).

An N-terminal signal peptide occupies residues 1–24; it reads MSVKWTSIILLIQLSFYFSSGSCG. Residues N67 and N68 are each glycosylated (N-linked (GlcNAc...) asparagine). A helical membrane pass occupies residues 494–514; that stretch reads IGFLLACVATVIFIIMKCCLF.

This sequence belongs to the UDP-glycosyltransferase family.

The protein localises to the microsome membrane. The protein resides in the endoplasmic reticulum membrane. The catalysed reaction is glucuronate acceptor + UDP-alpha-D-glucuronate = acceptor beta-D-glucuronoside + UDP + H(+). In terms of biological role, UDPGTs are of major importance in the conjugation and subsequent elimination of potentially toxic xenobiotics and endogenous compounds. This isozyme has glucuronidating capacity on estriol and does not catalyze the glucuronidation of beta-estradiol. Capable of conjugating 4-hydroxyestrone, androsterone, diclofenac, and hyodeoxycholic acid. In Macaca mulatta (Rhesus macaque), this protein is UDP-glucuronosyltransferase 2B33 (UGT2B33).